The following is a 532-amino-acid chain: UDP-glucuronosyltransferase 1A4 (532 aa).

The signal sequence occupies residues 1-27; it reads MVLGVWITLWRLVRLLLLLCVLPWAEG. 2 N-linked (GlcNAc...) asparagine glycosylation sites follow: asparagine 141 and asparagine 295. A helical membrane pass occupies residues 490 to 506; the sequence is VIGFLLAIVLTVAFVTF.

This sequence belongs to the UDP-glycosyltransferase family. In terms of assembly, homodimers. Homooligomer. Interacts with UGT1A1, UGT1A3, UGT1A6, UGT1A7, UGT1A8, UGT1A9 and UGT1A10 to form heterodimers.

Its subcellular location is the endoplasmic reticulum membrane. The enzyme catalyses glucuronate acceptor + UDP-alpha-D-glucuronate = acceptor beta-D-glucuronoside + UDP + H(+). The catalysed reaction is calcidiol + UDP-alpha-D-glucuronate = calcidiol 25-O-(beta-D-glucuronide) + UDP + H(+). It catalyses the reaction calcidiol + UDP-alpha-D-glucuronate = calcidiol 3-O-(beta-D-glucuronide) + UDP + H(+). It carries out the reaction calcitriol + UDP-alpha-D-glucuronate = calcitriol 25-O-(beta-D-glucuronide) + UDP + H(+). The enzyme catalyses (5Z,8Z,11Z,14Z)-eicosatetraenoate + UDP-alpha-D-glucuronate = O-[(5Z),(8Z),(11Z),(14Z)-eicosatetraenoyl]-beta-D-glucuronate + UDP. The catalysed reaction is 15-hydroxy-(5Z,8Z,11Z,13E)-eicosatetraenoate + UDP-alpha-D-glucuronate = 15-O-(beta-D-glucuronosyl)-(5Z,8Z,11Z,14Z)-eicosatetraenoate + UDP + H(+). It catalyses the reaction 20-hydroxy-(5Z,8Z,11Z,14Z)-eicosatetraenoate + UDP-alpha-D-glucuronate = 20-O-(beta-D-glucuronosyl)-(5Z,8Z,11Z,14Z)-eicosatetraenoate + UDP + H(+). UDP-glucuronosyltransferase (UGT) that catalyzes phase II biotransformation reactions in which lipophilic substrates are conjugated with glucuronic acid to increase the metabolite's water solubility, thereby facilitating excretion into either the urine or bile. Essential for the elimination and detoxification of drugs, xenobiotics and endogenous compounds. Involved in the glucuronidation of calcidiol, which is the major circulating form of vitamin D3 essential for the regulation of calcium and phosphate homeostasis. Also glucuronidates the biologically active form of vitamin D3, calcitriol, probably leading to its biliary transport and intestinal reabsorption. Involved in the glucuronidation of arachidonic acid (AA) and AA-derived eicosanoids including 15-HETE, 20-HETE and PGB1. The protein is UDP-glucuronosyltransferase 1A4 (Ugt1a4) of Oryctolagus cuniculus (Rabbit).